A 2100-amino-acid chain; its full sequence is MKSQEQQTPETREKSSSTSESGHPISLDSKTPPPNDSKIESIVKAQILFLLSTLREDQYDTKLEQIRQLINKNAPRVYHHFLRRLIQGNSYRIFGTGKSSDGLATYKLLLDELKSLTKSWVMAKRFSDAISGSDSEVFEDFDIEAFLDHFQFSPLERTNLLIGLTTSVKPTLAKKASALLKNTFQSLLNQLSDPTQQQSIDKNDLDLLREGLFTTDYDRIPLIKVPKFDAIIEKKLANSRPLTALFGPMKASKATLKSMKEAILKKYPPGTATETDVAYLINSLVAIHDYGAWDTVLMGKAIVSSFENLNWEAMLSMFDNPKFMITGTPSLVLFFTIFTNAYKLRQTNFTLDFLWVLWRNPLPQLSIISHIILSPTSMFDIREFNVNPVVSVDSLKDYSEELVNYAKIYEKSNLNCIELVQILLRLLSEVVTYETSLFLNFLDEKVSAELLLLGTLQLPLAWNPVQESLAFQWCSDFFSNFKEHKFVFVRIERTNPQFLFAFLRSLWLKDSSSVNQVVEFIIENDFTSHIGNIQPNRFALEIAALAAARKALSFQDWLDKKMLEFEDADGLNVFLVEVLDFLMSRAALQKNESEQKEESVVLSIDTVNVLLTTLMDNVSISEEVSEHIKDVQILCLQVYPRLFSLGHDRDSIVIATNTTNSFSPDVESEVESYFQALYERRISIGKIVLTLQNFKKSENPRDLDLFACLQHSLFDEYRFFPDYPLEALALTAVLFGSLIQFELLSFVPLGVALRYVYQALLMPTDSKMFRFGMQALVQFQEKLPKYINYCNLILGIPSLQLVRPDIYDSIREMIASNENTEVEKDKLDSFSALANPASPKAPEYTFVSIHVPPLNVPNAEGEIEESVCDNILFAINNLSQLNFNEKLKDVKDNLTPAYLPWFSHYIVTQRVSREANFLSLYGKFLEELKSSDLYKIVFRDTLQAILDIMNNNAETLSPSEKTNLKNLGSWLGSITLLRNKPITTLQVSFKDLLLEGIDSGRIDRVLPFVCKVLEKASSSVIFKPPNPWLMGILKLLVELYQFADFRLNLKFEIELLLNNLNVKMDNIEPSEMYRNHLVQKADLEKELPEDVLNAEFPDGTDVITQYIVAASSQITVTDAVAQVFGKPKPAIKNITQLIIQQSVLEIISAVVRRSVGIAAITTKSLLQKDFAAESNPSRLLLAARQMAKTLAGNLAMVTCREPLQMLMINNFRTIALQDVENVHAAVAQAIDELVSQNLFVASSVIESVASETAIAEIDAEIEHMIVERVRHRKTTPNLPFVDPAGAANLHLNLPSVLKLSSELTPQQFQLYENFDRLSLSTIMSNNSFTSLNGLRTDSADSTDALNSNLNNTVENEANQTALNYARNLLIIIGQLFQLAAQMPYTSMQEVPADHELHELVNQFLTGVASINHPIADHVFLLCAQECCRILLTDSKSPFILEVFSAILEYICQASTKTAINVSLYWNFSNDLEKLNLPIILSLIRFGILTSGEVDYHVARGVRSEQGSGPVTDFAIELLRTAVGGENPMALPGNFVNSITSLYEISESFSGETKQAYEQLVETMNKSVSPASEILSDLDNKQQLNDQIIIVFVSWVHLLRNSATNDETKAAFVYQLHKQGILSEPELCIQFFRCNLEAVLVAFLEAASVNAPDYFNVDAYASLLVNVVKYTEGSTEGTVSSKSVLFRKIIALIIGVFAELHNSMAEFVHQKTFFRLFSSILSELDDAKDVLESCFVDIYSVILECFLAIQPRSFPAFTFAWLSLISHSYLLPKVLLVNNDKINDLFSEILMSFLKFLDLKDDIDKAQFKLLYNGFLRIILVLLHDFPGFLATHCYQLIPYIPLECVQLRNMVLSAFPSDLHLPDPFAQGLKVGRLPEVTRAPLISNSVSASLEKFASALDLEACFSSSKPAEVAKLLLEVYSSQDTPTKLNEWANYFMLCLIRHATRDSPAKQAPQFQSKSPECVIISTMNRSCDSKCRYFLLTAIANQLRYPSSHTYYASCCFLYLFKSSSNNPQELLIKEQMTTVLLERIICNRPHPWGLLITFTELLKNEDYNFWKHPYIKRNDEICRLFDSLHEHVMAPSSANNVSTEEATELMGQV.

The tract at residues 1-36 (MKSQEQQTPETREKSSSTSESGHPISLDSKTPPPND) is disordered. Serine 1341 and serine 1568 each carry phosphoserine.

It is found in the cytoplasm. The protein resides in the nucleus. Its function is as follows. Acts as a component of the CCR4-NOT core complex, which in the nucleus seems to be a general transcription factor, and in the cytoplasm the major mRNA deadenylase involved in mRNA turnover. The NOT protein subcomplex negatively regulates the basal and activated transcription of many genes. Preferentially affects TC-type TATA element-dependent transcription. Could directly or indirectly inhibit component(s) of the general transcription machinery. The polypeptide is General negative regulator of transcription subunit 1 (not1) (Schizosaccharomyces pombe (strain 972 / ATCC 24843) (Fission yeast)).